Consider the following 239-residue polypeptide: Ribosomal RNA large subunit methyltransferase E (239 aa).

Positions M1 to K20 are disordered. Residues T11 to K20 are compositionally biased toward basic residues. S-adenosyl-L-methionine-binding residues include G81, W83, D104, D120, and D144. K184 functions as the Proton acceptor in the catalytic mechanism.

This sequence belongs to the class I-like SAM-binding methyltransferase superfamily. RNA methyltransferase RlmE family.

It localises to the cytoplasm. The catalysed reaction is uridine(2552) in 23S rRNA + S-adenosyl-L-methionine = 2'-O-methyluridine(2552) in 23S rRNA + S-adenosyl-L-homocysteine + H(+). Functionally, specifically methylates the uridine in position 2552 of 23S rRNA at the 2'-O position of the ribose in the fully assembled 50S ribosomal subunit. This chain is Ribosomal RNA large subunit methyltransferase E, found in Rhizobium etli (strain ATCC 51251 / DSM 11541 / JCM 21823 / NBRC 15573 / CFN 42).